The primary structure comprises 457 residues: Bifunctional protein GlmU (457 aa).

The tract at residues 1 to 229 (MYNCAIILAA…YEEIMGVNSR (229 aa)) is pyrophosphorylase. UDP-N-acetyl-alpha-D-glucosamine contacts are provided by residues 8 to 11 (LAAG), Lys22, Gln73, and 78 to 79 (GT). Mg(2+) is bound at residue Asp103. UDP-N-acetyl-alpha-D-glucosamine is bound by residues Gly140, Glu155, Asn170, and Asn227. Residue Asn227 participates in Mg(2+) binding. Residues 230 to 250 (VQLSEAEIVMRKRINHKHMVN) form a linker region. The N-acetyltransferase stretch occupies residues 251-457 (GVTFIDCEST…WLDKKGLLKK (207 aa)). The UDP-N-acetyl-alpha-D-glucosamine site is built by Arg332 and Lys350. His362 acts as the Proton acceptor in catalysis. Positions 365 and 376 each coordinate UDP-N-acetyl-alpha-D-glucosamine. Acetyl-CoA is bound by residues 385–386 (NY), Ala422, and Arg439.

The protein in the N-terminal section; belongs to the N-acetylglucosamine-1-phosphate uridyltransferase family. This sequence in the C-terminal section; belongs to the transferase hexapeptide repeat family. As to quaternary structure, homotrimer. It depends on Mg(2+) as a cofactor.

Its subcellular location is the cytoplasm. The enzyme catalyses alpha-D-glucosamine 1-phosphate + acetyl-CoA = N-acetyl-alpha-D-glucosamine 1-phosphate + CoA + H(+). The catalysed reaction is N-acetyl-alpha-D-glucosamine 1-phosphate + UTP + H(+) = UDP-N-acetyl-alpha-D-glucosamine + diphosphate. Its pathway is nucleotide-sugar biosynthesis; UDP-N-acetyl-alpha-D-glucosamine biosynthesis; N-acetyl-alpha-D-glucosamine 1-phosphate from alpha-D-glucosamine 6-phosphate (route II): step 2/2. The protein operates within nucleotide-sugar biosynthesis; UDP-N-acetyl-alpha-D-glucosamine biosynthesis; UDP-N-acetyl-alpha-D-glucosamine from N-acetyl-alpha-D-glucosamine 1-phosphate: step 1/1. It participates in bacterial outer membrane biogenesis; LPS lipid A biosynthesis. In terms of biological role, catalyzes the last two sequential reactions in the de novo biosynthetic pathway for UDP-N-acetylglucosamine (UDP-GlcNAc). The C-terminal domain catalyzes the transfer of acetyl group from acetyl coenzyme A to glucosamine-1-phosphate (GlcN-1-P) to produce N-acetylglucosamine-1-phosphate (GlcNAc-1-P), which is converted into UDP-GlcNAc by the transfer of uridine 5-monophosphate (from uridine 5-triphosphate), a reaction catalyzed by the N-terminal domain. The chain is Bifunctional protein GlmU from Clostridium botulinum (strain ATCC 19397 / Type A).